A 310-amino-acid polypeptide reads, in one-letter code: MHAYTLKAPAKINLLLEIIGDRPDGFHELVMVMQSVNLADIVELQPLSGDRIELFCNHPQVPCDQSNLAHRAARLMQEQFPGKGGVAITIDKKIPIGAGLAGGSADAAAVLVGLDLMWGLGLTQAELHTYAAKLGSDIPFCVSGGTALALGRGEELTPLPDLDQLYAVLAKYRSLSVATPWAYKTYRQQFSESYARDPEALEKRRREGHSVELLAAISHRDSQKVPQYLYNDLEKVVLPEHPQVQEIRDLFQSFGALGTMMSGSGPTVFGLADSRSKAELMATQLQTALPDPDLEILVTKFCSSGIQLLS.

Residue lysine 11 is part of the active site. 95-105 (PIGAGLAGGSA) contributes to the ATP binding site. Aspartate 137 is an active-site residue.

The protein belongs to the GHMP kinase family. IspE subfamily.

The enzyme catalyses 4-CDP-2-C-methyl-D-erythritol + ATP = 4-CDP-2-C-methyl-D-erythritol 2-phosphate + ADP + H(+). Its pathway is isoprenoid biosynthesis; isopentenyl diphosphate biosynthesis via DXP pathway; isopentenyl diphosphate from 1-deoxy-D-xylulose 5-phosphate: step 3/6. Functionally, catalyzes the phosphorylation of the position 2 hydroxy group of 4-diphosphocytidyl-2C-methyl-D-erythritol. The sequence is that of 4-diphosphocytidyl-2-C-methyl-D-erythritol kinase from Acaryochloris marina (strain MBIC 11017).